Reading from the N-terminus, the 269-residue chain is Basic leucine zipper 19 (269 aa).

One can recognise a bZIP domain in the interval 140-196 (DPKRVKRILANRQSAQRSRVRKLQYISELERSVTTLQMEVSALSPRVAFLDHQRSLL). A basic motif region spans residues 142–161 (KRVKRILANRQSAQRSRVRK). The segment at 168–196 (LERSVTTLQMEVSALSPRVAFLDHQRSLL) is leucine-zipper.

As to expression, expressed in roots and shoots.

The protein localises to the nucleus. Its function is as follows. Transcription regulator. This Oryza sativa subsp. japonica (Rice) protein is Basic leucine zipper 19 (BZIP19).